The following is a 172-amino-acid chain: Adenine phosphoribosyltransferase (172 aa).

The protein belongs to the purine/pyrimidine phosphoribosyltransferase family. Homodimer.

The protein localises to the cytoplasm. It catalyses the reaction AMP + diphosphate = 5-phospho-alpha-D-ribose 1-diphosphate + adenine. It functions in the pathway purine metabolism; AMP biosynthesis via salvage pathway; AMP from adenine: step 1/1. Catalyzes a salvage reaction resulting in the formation of AMP, that is energically less costly than de novo synthesis. The protein is Adenine phosphoribosyltransferase of Pelobacter propionicus (strain DSM 2379 / NBRC 103807 / OttBd1).